Reading from the N-terminus, the 90-residue chain is MACPLDQAIGLLVAIFHKYSGREGDKHTLSKKELKELIQKELTIGSKLQDAEIARLMEDLDRNKDQEVNFQEYVTFLGALALIYNEALKG.

EF-hand domains follow at residues Leu-12–Lys-47 and Leu-48–Ile-83. Residues Thr-28 and Glu-33 each contribute to the Ca(2+) site. Lys-40 is subject to N6-acetyllysine. Ser-46 carries the phosphoserine modification. Residue Lys-47 is modified to N6-acetyllysine; alternate. Lys-47 bears the N6-succinyllysine; alternate mark. Ca(2+) contacts are provided by Asp-61, Asn-63, Asp-65, Glu-67, and Glu-72.

It belongs to the S-100 family. As to quaternary structure, homodimer; head to tail assembly of 2 subunits. Interacts with CACYBP in a calcium-dependent manner. Interacts with ANXA2 and ANXA11 (via N-terminus). Interacts with SUGT1. Interacts with TP53; has higher affinity for TP53 that is phosphorylated on its N-terminal domain, and lower affinity for TP53 that is phosphorylated on its C-terminal domain. Interacts with tropomyosin. Interacts with FKBP4. Interacts with PPP5C (via TPR repeats); the interaction is calcium-dependent and modulates PPP5C activity. Interacts with TPPP; this interaction inhibits TPPP dimerization. In terms of processing, the N-terminus is blocked.

It localises to the nucleus envelope. The protein localises to the cytoplasm. It is found in the cell membrane. May function as calcium sensor and modulator, contributing to cellular calcium signaling. May function by interacting with other proteins, such as TPR-containing proteins, and indirectly play a role in many physiological processes such as the reorganization of the actin cytoskeleton and in cell motility. Binds 2 calcium ions. Calcium binding is cooperative. The sequence is that of Protein S100-A6 (S100A6) from Homo sapiens (Human).